The sequence spans 452 residues: tRNA modification GTPase MnmE (452 aa).

(6S)-5-formyl-5,6,7,8-tetrahydrofolate contacts are provided by Arg24, Glu81, and Lys120. The TrmE-type G domain maps to 217 to 373 (GIKTAIVGKT…LIMKIEQMHI (157 aa)). Asn227 lines the K(+) pocket. Residues 227–232 (NVGKSS), 246–252 (TDIHGTT), and 271–274 (DTAG) contribute to the GTP site. Residue Ser231 coordinates Mg(2+). Thr246, Ile248, and Thr251 together coordinate K(+). Thr252 is a binding site for Mg(2+). Position 452 (Lys452) interacts with (6S)-5-formyl-5,6,7,8-tetrahydrofolate.

This sequence belongs to the TRAFAC class TrmE-Era-EngA-EngB-Septin-like GTPase superfamily. TrmE GTPase family. As to quaternary structure, homodimer. Heterotetramer of two MnmE and two MnmG subunits. It depends on K(+) as a cofactor.

The protein localises to the cytoplasm. Its function is as follows. Exhibits a very high intrinsic GTPase hydrolysis rate. Involved in the addition of a carboxymethylaminomethyl (cmnm) group at the wobble position (U34) of certain tRNAs, forming tRNA-cmnm(5)s(2)U34. The chain is tRNA modification GTPase MnmE from Mesoplasma florum (strain ATCC 33453 / NBRC 100688 / NCTC 11704 / L1) (Acholeplasma florum).